The primary structure comprises 886 residues: Protein translocase subunit SecA (886 aa).

Residues Gln85, 103–107, and Asp492 each bind ATP; that span reads GEGKT. The span at 841–864 shows a compositional bias: basic and acidic residues; it reads RVVENRYAEEGPKQPARRENKVGR. The tract at residues 841-866 is disordered; sequence RVVENRYAEEGPKQPARRENKVGRND. Positions 868, 870, 879, and 880 each coordinate Zn(2+).

The protein belongs to the SecA family. As to quaternary structure, monomer and homodimer. Part of the essential Sec protein translocation apparatus which comprises SecA, SecYEG and auxiliary proteins SecDF. Other proteins may also be involved. The cofactor is Zn(2+).

The protein localises to the cell membrane. It is found in the cytoplasm. The catalysed reaction is ATP + H2O + cellular proteinSide 1 = ADP + phosphate + cellular proteinSide 2.. In terms of biological role, part of the Sec protein translocase complex. Interacts with the SecYEG preprotein conducting channel. Has a central role in coupling the hydrolysis of ATP to the transfer of proteins into and across the cell membrane, serving as an ATP-driven molecular motor driving the stepwise translocation of polypeptide chains across the membrane. The chain is Protein translocase subunit SecA from Pelotomaculum thermopropionicum (strain DSM 13744 / JCM 10971 / SI).